Consider the following 632-residue polypeptide: PWWP domain-containing protein 5 (632 aa).

One can recognise a PWWP domain in the interval 97–158 (DSDLVWAKLR…ASQIKPFHQN (62 aa)). The tract at residues 310–452 (RKTDYKDNAE…AERKISSPDE (143 aa)) is disordered. 4 stretches are compositionally biased toward basic and acidic residues: residues 313–326 (DYKD…EKTL), 339–364 (STEK…GKSE), 371–383 (QQKE…HSNE), and 425–449 (KSTE…KISS). Residues 352–359 (KRKVESSE) carry the Nuclear localization signal motif.

Belongs to the PDP family. In terms of assembly, component of the PRC2 (polycomb repressive complex 2) complex which regulates histone methylation on histone H3K27.

It localises to the nucleus. Its function is as follows. May influence gene expression by regulating the function of the PRC2 complex and modulating H3K27me3 level. The polypeptide is PWWP domain-containing protein 5 (Arabidopsis thaliana (Mouse-ear cress)).